The chain runs to 406 residues: Endoplasmic reticulum resident protein 44 (406 aa).

The first 29 residues, 1 to 29 (MIPGIFLSLPDLRCSLLLLVTWVFTPVTA), serve as a signal peptide directing secretion. The Thioredoxin domain maps to 30 to 138 (EIISLDTENI…VKALADYIRQ (109 aa)). Cystine bridges form between Cys189-Cys241 and Cys301-Cys318. The interval 236–285 (WIQDKCVPLVREITFENGEELTEEGLPFLILFHMKEDTESLEIFQNEVAR) is interaction with ITPR1. The disordered stretch occupies residues 360–387 (FHHGPDPTDTAPGEEVQDVASSPPESSF). A compositionally biased stretch (polar residues) spans 378 to 387 (VASSPPESSF). A Prevents secretion from ER motif is present at residues 403–406 (RDEL).

As to quaternary structure, forms mixed disulfides with both ERO1A and ERO1B and cargo folding intermediates; the interactions with ERO1A and ERO1B result in their retention in the endoplasmic reticulum. Directly interacts with ITPR1 in a pH-, redox state- and calcium-dependent manner, but not with ITPR2 or ITPR3. The strength of this interaction inversely correlates with calcium concentration.

The protein localises to the endoplasmic reticulum lumen. Mediates thiol-dependent retention in the early secretory pathway, forming mixed disulfides with substrate proteins through its conserved CRFS motif. Inhibits the calcium channel activity of ITPR1. May have a role in the control of oxidative protein folding in the endoplasmic reticulum. Required to retain ERO1A and ERO1B in the endoplasmic reticulum. The chain is Endoplasmic reticulum resident protein 44 (ERP44) from Bos taurus (Bovine).